The following is a 462-amino-acid chain: MATMAATKVPEVRDVTRIERIGAHSHIRGLGLDDALEPRQVSQGMVGQLASRRAAGVILEMIKEGKIAGRAVLIAGQPGTGKTAIAMGMAQALGSDTPFTAIAGSEIFSLEMSKTEALTQAFRRSIGVRIKEETEIIEGEVVEVQIDRPATGTGAKVGKLTLKTTEMETIYDLGTKMIESLTKEKVQAGDVITIDKATGKITKLGRAFTRARDYDAMGSQTKFVQCPDGELQKRKEVVHTVSLHEIDVINSRTQGFLALFSGDTGEIKSEVREQINAKVAEWREEGKAEIIPGVLFIDEVHMLDIECFSFLNRALESDMAPVLIMATNRGITRIRGTNYQSPHGIPIDLLDRLLIISTSPYNEKETKQILKIRCEEEDVDMSEDAYTVLTRIGLETSLRYSMQLITAASLVCRKRKGTEVQVDDIKRVYSLFLDESRSTQYMKEYQDAFMFNEMKTDTMDTS.

An ATP-binding site is contributed by Gly76–Thr83.

Belongs to the RuvB family. As to quaternary structure, forms homohexameric rings. Can form a dodecamer with ruvbl2 made of two stacked hexameric rings. Is a component of the RNA polymerase II holoenzyme complex. Component of the chromatin-remodeling Ino80 complex. Component of some MLL1/MLL complex.

It is found in the nucleus. The protein localises to the dynein axonemal particle. The catalysed reaction is ATP + H2O = ADP + phosphate + H(+). Its function is as follows. Has single-stranded DNA-stimulated ATPase and ATP-dependent DNA helicase (5' to 3') activity suggesting a role in nuclear processes such as recombination and transcription. Proposed core component of the chromatin remodeling INO80 complex which exhibits DNA- and nucleosome-activated ATPase activity and catalyzes ATP-dependent nucleosome sliding. Involved in the endoplasmic reticulum (ER)-associated degradation (ERAD) pathway where it negatively regulates expression of ER stress response genes. This is RuvB-like 2 (ruvbl2) from Xenopus laevis (African clawed frog).